Here is a 315-residue protein sequence, read N- to C-terminus: Glycine--tRNA ligase alpha subunit (315 aa).

Belongs to the class-II aminoacyl-tRNA synthetase family. As to quaternary structure, tetramer of two alpha and two beta subunits.

It is found in the cytoplasm. It catalyses the reaction tRNA(Gly) + glycine + ATP = glycyl-tRNA(Gly) + AMP + diphosphate. The sequence is that of Glycine--tRNA ligase alpha subunit from Pseudomonas paraeruginosa (strain DSM 24068 / PA7) (Pseudomonas aeruginosa (strain PA7)).